Consider the following 106-residue polypeptide: Urease subunit beta (106 aa).

The protein belongs to the urease beta subunit family. Heterotrimer of UreA (gamma), UreB (beta) and UreC (alpha) subunits. Three heterotrimers associate to form the active enzyme.

It is found in the cytoplasm. It carries out the reaction urea + 2 H2O + H(+) = hydrogencarbonate + 2 NH4(+). The protein operates within nitrogen metabolism; urea degradation; CO(2) and NH(3) from urea (urease route): step 1/1. In Klebsiella pneumoniae (strain 342), this protein is Urease subunit beta.